We begin with the raw amino-acid sequence, 193 residues long: Protein hunchback (193 aa).

2 disordered regions span residues 16 to 126 (SHHH…ATTT) and 146 to 193 (SNDK…KYMA). A compositionally biased stretch (basic residues) spans 17–31 (HHHHHHHAHHSHHQH). Composition is skewed to low complexity over residues 35–46 (SNSNSNASSPHQ) and 56–77 (SSNNLQLEQYLKQQQQQQQQQQ). A compositionally biased stretch (polar residues) spans 89 to 99 (PSPSNNDQNSR). A compositionally biased stretch (basic and acidic residues) spans 174-193 (EPEKEHDLMSNSSEDMKYMA).

It belongs to the hunchback C2H2-type zinc-finger protein family.

It localises to the nucleus. Its function is as follows. Gap class segmentation protein that controls development of head structures. This is Protein hunchback (hb) from Drosophila iki (Fruit fly).